Reading from the N-terminus, the 600-residue chain is UvrABC system protein C (600 aa).

The 86-residue stretch at 15 to 100 folds into the GIY-YIG domain; it reads NSAGVYEYFN…IKQLHPKYNI (86 aa). Residues 203–238 form the UVR domain; it reads SVLLKNLEKQMLVLAQNENYEEAAKIRDQIATIKDL.

It belongs to the UvrC family. As to quaternary structure, interacts with UvrB in an incision complex.

The protein localises to the cytoplasm. Functionally, the UvrABC repair system catalyzes the recognition and processing of DNA lesions. UvrC both incises the 5' and 3' sides of the lesion. The N-terminal half is responsible for the 3' incision and the C-terminal half is responsible for the 5' incision. This is UvrABC system protein C from Campylobacter jejuni subsp. doylei (strain ATCC BAA-1458 / RM4099 / 269.97).